Consider the following 111-residue polypeptide: Cytochrome c oxidase subunit 7A2-like, mitochondrial (111 aa).

A mitochondrion-targeting transit peptide spans 1 to 54 (MYYKFSSFTQKLAGAWASEAYTPQGLKPVSTEAPPIIFATPTKLTSSVTAYDYS). Lys-68 is modified (N6-acetyllysine). Residues 79–104 (PDQMLYRTTMALTLGGTIYCLIALYM) traverse the membrane as a helical segment.

Belongs to the cytochrome c oxidase VIIa family.

The protein resides in the mitochondrion inner membrane. In terms of biological role, non-functional protein. In contrast to the protein found in other strains (AC Q99KD6), cannot induce the assembly of mitochondrial respiratory supercomplexes. This is Cytochrome c oxidase subunit 7A2-like, mitochondrial from Mus musculus (Mouse).